A 302-amino-acid polypeptide reads, in one-letter code: MADNGQNVDLLSIEANEVQHDAVLDYYGRRLATCSSDKTIKIFEVEGDKHTLVETLRGHEGPVWCVAWAHPKYGNILASSSYDGKVIIWREQSSTWQKIYEVALHTASVNIVAWAPHEVGCLLACASSDGNVSVLEFKDNAWSHVIFQACGSGVNSVSWAPAVAPGQVVSASGNQAGAARRFVTGGSDCQVKLWDFSAETGSWQSTQILTGHTDWVRDVAWSPTVLSKSYIASASQDKTVRIWTSSDLRDWKSTVLNVDAVAWRVSWSLSGNVLAVSTGDNRVSLWKERLSGGWECVKTIEE.

6 WD repeats span residues 14–53 (EANE…HTLV), 58–99 (GHEG…WQKI), 104–145 (LHTA…WSHV), 149–204 (ACGS…GSWQ), 211–253 (GHTD…DWKS), and 257–296 (NVDA…GWEC).

It belongs to the WD repeat SEC13 family. In terms of assembly, the COPII coat is composed of at least 5 proteins: the SEC23/24 complex, the SEC13/31 complex, and the protein SAR1. Component of the nuclear pore complex (NPC). NPC constitutes the exclusive means of nucleocytoplasmic transport. NPCs allow the passive diffusion of ions and small molecules and the active, nuclear transport receptor-mediated bidirectional transport of macromolecules such as proteins, RNAs, ribonucleoparticles (RNPs), and ribosomal subunits across the nuclear envelope. Due to its 8-fold rotational symmetry, all subunits are present with 8 copies or multiples thereof.

It is found in the cytoplasmic vesicle. Its subcellular location is the COPII-coated vesicle membrane. The protein localises to the endoplasmic reticulum membrane. It localises to the nucleus. The protein resides in the nuclear pore complex. Component of the coat protein complex II (COPII) which promotes the formation of transport vesicles from the endoplasmic reticulum (ER). The coat has two main functions, the physical deformation of the endoplasmic reticulum membrane into vesicles and the selection of cargo molecules. It also functions as a component of the nuclear pore complex (NPC). NPC components, collectively referred to as nucleoporins (NUPs), can play the role of both NPC structural components and of docking or interaction partners for transiently associated nuclear transport factors. SEC13 is required for efficient mRNA export from the nucleus to the cytoplasm and for correct nuclear pore biogenesis and distribution. The sequence is that of Protein transport protein SEC13 (SEC13) from Phaeosphaeria nodorum (strain SN15 / ATCC MYA-4574 / FGSC 10173) (Glume blotch fungus).